A 393-amino-acid polypeptide reads, in one-letter code: GDP-mannose:cellobiosyl-diphosphopolyprenol alpha-mannosyltransferase (393 aa).

Belongs to the glycosyltransferase group 1 family. Glycosyltransferase 4 subfamily.

The enzyme catalyses beta-D-Glc-(1-&gt;4)-alpha-D-Glc-di-trans,octa-cis-undecaprenyl diphosphate + GDP-alpha-D-mannose = alpha-D-Man-(1-&gt;3)-beta-D-Glc-(1-&gt;4)-alpha-D-Glc-1-di-trans,octa-cis-undecaprenyl diphosphate + GDP + H(+). Its function is as follows. Involved in the biosynthesis of the exopolysaccharide acetan, a water-soluble polysaccharide involved in production of bacterial cellulose (BC). This Komagataeibacter xylinus (Gluconacetobacter xylinus) protein is GDP-mannose:cellobiosyl-diphosphopolyprenol alpha-mannosyltransferase (aceC).